A 431-amino-acid chain; its full sequence is Beta-lactamase hydrolase-like protein (431 aa).

3 residues coordinate Zn(2+): histidine 212, histidine 214, and histidine 286. Substrate is bound at residue aspartate 309.

It belongs to the metallo-beta-lactamase superfamily. Requires Zn(2+) as cofactor.

Its function is as follows. Could play a role in cell adherence or biofilm development. This chain is Beta-lactamase hydrolase-like protein, found in Xylella fastidiosa (strain 9a5c).